Consider the following 309-residue polypeptide: Integral membrane protein sed5 (309 aa).

Residues 1–288 (MSFQDRTAEF…KFYERMSSNR (288 aa)) are Cytoplasmic-facing. Residues 37 to 66 (KHQKSEFTRIAQKIANQINQTGEKLQKLSQ) are a coiled coil. A t-SNARE coiled-coil homology domain is found at 218–280 (DTYSQQRMSS…GSAQREIVKF (63 aa)). The helical; Anchor for type IV membrane protein transmembrane segment at 289–308 (ALLFKIFGIVIIFFLLWVLV) threads the bilayer. Residue Thr-309 is a topological domain, vesicular.

It belongs to the syntaxin family.

The protein resides in the membrane. It is found in the golgi apparatus membrane. Its function is as follows. Required for vesicular transport between the endoplasmic reticulum and the Golgi complex. Acts as a target organelle soluble NSF attachment protein receptor (t-SNARE). The sequence is that of Integral membrane protein sed5 (sed5) from Schizosaccharomyces pombe (strain 972 / ATCC 24843) (Fission yeast).